Here is a 520-residue protein sequence, read N- to C-terminus: ATP synthase subunit alpha (520 aa).

169–176 (GDRKTGKT) provides a ligand contact to ATP.

The protein belongs to the ATPase alpha/beta chains family. In terms of assembly, F-type ATPases have 2 components, CF(1) - the catalytic core - and CF(0) - the membrane proton channel. CF(1) has five subunits: alpha(3), beta(3), gamma(1), delta(1), epsilon(1). CF(0) has three main subunits: a(1), b(2) and c(9-12). The alpha and beta chains form an alternating ring which encloses part of the gamma chain. CF(1) is attached to CF(0) by a central stalk formed by the gamma and epsilon chains, while a peripheral stalk is formed by the delta and b chains.

The protein resides in the cell membrane. It catalyses the reaction ATP + H2O + 4 H(+)(in) = ADP + phosphate + 5 H(+)(out). In terms of biological role, produces ATP from ADP in the presence of a proton gradient across the membrane. The alpha chain is a regulatory subunit. This is ATP synthase subunit alpha from Oenococcus oeni (strain ATCC BAA-331 / PSU-1).